A 363-amino-acid polypeptide reads, in one-letter code: Pyrimidine monooxygenase RutA (363 aa).

Residues 49–50 (IK), Asn115, Glu124, 140–141 (RY), and Ser190 contribute to the FMN site.

It belongs to the NtaA/SnaA/DszA monooxygenase family. RutA subfamily.

The enzyme catalyses uracil + FMNH2 + NADH + O2 = (Z)-3-ureidoacrylate + FMN + NAD(+) + H2O + H(+). It catalyses the reaction thymine + FMNH2 + NADH + O2 = (Z)-2-methylureidoacrylate + FMN + NAD(+) + H2O + H(+). Functionally, catalyzes the pyrimidine ring opening between N-3 and C-4 by an unusual flavin hydroperoxide-catalyzed mechanism, adding oxygen atoms in the process to yield ureidoacrylate peracid, that immediately reacts with FMN forming ureidoacrylate and FMN-N(5)-oxide. The FMN-N(5)-oxide reacts spontaneously with NADH to produce FMN. Requires the flavin reductase RutF to regenerate FMN in vivo. This Klebsiella pneumoniae (strain 342) protein is Pyrimidine monooxygenase RutA.